A 741-amino-acid polypeptide reads, in one-letter code: Multifunctional procollagen lysine hydroxylase and glycosyltransferase LH3 (741 aa).

Positions Met1–Ala27 are cleaved as a signal peptide. Residues Ser28–Pro293 are required for glycosyltransferase activity. Val47–Thr49 contacts UDP. Residue Asn66 is glycosylated (N-linked (GlcNAc...) asparagine). 3 residues coordinate Mn(2+): Asp115, Asp118, and His256. Asp115–Tyr117 provides a ligand contact to UDP. Gly259–Lys262 contacts UDP. Intrachain disulfides connect Cys282-Cys285 and Cys382-Cys388. Residues Pro298 to His523 form an accessory region region. A glycan (N-linked (GlcNAc...) asparagine) is linked at Asn551. Cysteines 566 and 701 form a disulfide. Arg602 and Tyr659 together coordinate 2-oxoglutarate. In terms of domain architecture, Fe2OG dioxygenase spans Arg650–Pro741. Residues His670 and Asp672 each contribute to the Fe cation site. The tract at residues Thr675–Leu718 is important for dimerization. Residue Asn679 coordinates 2-oxoglutarate. Residue His722 participates in Fe cation binding. Residue Arg732 coordinates 2-oxoglutarate.

As to quaternary structure, homodimer. Fe(2+) serves as cofactor. It depends on L-ascorbate as a cofactor. Mn(2+) is required as a cofactor. Detected in heart and bone.

The protein resides in the rough endoplasmic reticulum. Its subcellular location is the endoplasmic reticulum lumen. The protein localises to the endoplasmic reticulum membrane. It is found in the secreted. It localises to the extracellular space. It carries out the reaction L-lysyl-[collagen] + 2-oxoglutarate + O2 = (5R)-5-hydroxy-L-lysyl-[collagen] + succinate + CO2. The enzyme catalyses (5R)-5-hydroxy-L-lysyl-[collagen] + UDP-alpha-D-galactose = (5R)-5-O-(beta-D-galactosyl)-5-hydroxy-L-lysyl-[collagen] + UDP + H(+). It catalyses the reaction (5R)-5-O-(beta-D-galactosyl)-5-hydroxy-L-lysyl-[collagen] + UDP-alpha-D-glucose = (5R)-5-O-[alpha-D-glucosyl-(1-&gt;2)-beta-D-galactosyl]-5-hydroxy-L-lysyl-[collagen] + UDP + H(+). In terms of biological role, multifunctional enzyme that catalyzes a series of post-translational modifications on Lys residues in procollagen. Plays a redundant role in catalyzing the formation of hydroxylysine residues in -Xaa-Lys-Gly- sequences in collagens. Plays a redundant role in catalyzing the transfer of galactose onto hydroxylysine groups, giving rise to galactosyl 5-hydroxylysine. Has an essential role by catalyzing the subsequent transfer of glucose moieties, giving rise to 1,2-glucosylgalactosyl-5-hydroxylysine residues. Catalyzes hydroxylation and glycosylation of Lys residues in the MBL1 collagen-like domain, giving rise to hydroxylysine and 1,2-glucosylgalactosyl-5-hydroxylysine residues. Catalyzes hydroxylation and glycosylation of Lys residues in the ADIPOQ collagen-like domain, giving rise to hydroxylysine and 1,2-glucosylgalactosyl-5-hydroxylysine residues. Essential for normal biosynthesis and secretion of type IV collagens. Essential for normal formation of basement membranes. This is Multifunctional procollagen lysine hydroxylase and glycosyltransferase LH3 (Plod3) from Rattus norvegicus (Rat).